Here is a 145-residue protein sequence, read N- to C-terminus: MKGLIQRVRGARVEVAGEIVGAIDNGLLALVAVEPEDTPEHADKLLHKLLNYRVFSDEQGKMNRSLKDIGGGLLLVSQFTLAADTRNGMRPSFSTAAPPALGAELFDYLLQRAQGQHPDVASGRFGADMQVHLVNDGPVTFMLQI.

A Gly-cisPro motif, important for rejection of L-amino acids motif is present at residues 137-138 (GP).

The protein belongs to the DTD family. Homodimer.

Its subcellular location is the cytoplasm. It carries out the reaction glycyl-tRNA(Ala) + H2O = tRNA(Ala) + glycine + H(+). The enzyme catalyses a D-aminoacyl-tRNA + H2O = a tRNA + a D-alpha-amino acid + H(+). In terms of biological role, an aminoacyl-tRNA editing enzyme that deacylates mischarged D-aminoacyl-tRNAs. Also deacylates mischarged glycyl-tRNA(Ala), protecting cells against glycine mischarging by AlaRS. Acts via tRNA-based rather than protein-based catalysis; rejects L-amino acids rather than detecting D-amino acids in the active site. By recycling D-aminoacyl-tRNA to D-amino acids and free tRNA molecules, this enzyme counteracts the toxicity associated with the formation of D-aminoacyl-tRNA entities in vivo and helps enforce protein L-homochirality. This chain is D-aminoacyl-tRNA deacylase, found in Pseudomonas entomophila (strain L48).